A 94-amino-acid polypeptide reads, in one-letter code: Co-chaperonin GroES (94 aa).

The tract at residues 17-53 (DSNPNSPIQLPDSAKKKPTKGKVVSVGPGASNSDGKV) is disordered.

It belongs to the GroES chaperonin family. As to quaternary structure, heptamer of 7 subunits arranged in a ring. Interacts with the chaperonin GroEL.

The protein localises to the cytoplasm. Its function is as follows. Together with the chaperonin GroEL, plays an essential role in assisting protein folding. The GroEL-GroES system forms a nano-cage that allows encapsulation of the non-native substrate proteins and provides a physical environment optimized to promote and accelerate protein folding. GroES binds to the apical surface of the GroEL ring, thereby capping the opening of the GroEL channel. This chain is Co-chaperonin GroES, found in Anaplasma phagocytophilum (strain HZ).